We begin with the raw amino-acid sequence, 872 residues long: Alanine--tRNA ligase (872 aa).

Zn(2+)-binding residues include His-558, His-562, Cys-660, and His-664.

Belongs to the class-II aminoacyl-tRNA synthetase family. The cofactor is Zn(2+).

The protein localises to the cytoplasm. The enzyme catalyses tRNA(Ala) + L-alanine + ATP = L-alanyl-tRNA(Ala) + AMP + diphosphate. Its function is as follows. Catalyzes the attachment of alanine to tRNA(Ala) in a two-step reaction: alanine is first activated by ATP to form Ala-AMP and then transferred to the acceptor end of tRNA(Ala). Also edits incorrectly charged Ser-tRNA(Ala) and Gly-tRNA(Ala) via its editing domain. In Chlamydia pneumoniae (Chlamydophila pneumoniae), this protein is Alanine--tRNA ligase.